The primary structure comprises 273 residues: Shikimate dehydrogenase (NADP(+)) (273 aa).

Residues 14 to 16 (SKS) and T61 contribute to the shikimate site. K65 functions as the Proton acceptor in the catalytic mechanism. Residues N86 and D102 each contribute to the shikimate site. NADP(+)-binding positions include 126–130 (GAGGA), 150–155 (NRTVAK), and M213. Residue Y215 coordinates shikimate. G237 provides a ligand contact to NADP(+).

It belongs to the shikimate dehydrogenase family. In terms of assembly, homodimer.

It catalyses the reaction shikimate + NADP(+) = 3-dehydroshikimate + NADPH + H(+). It participates in metabolic intermediate biosynthesis; chorismate biosynthesis; chorismate from D-erythrose 4-phosphate and phosphoenolpyruvate: step 4/7. Involved in the biosynthesis of the chorismate, which leads to the biosynthesis of aromatic amino acids. Catalyzes the reversible NADPH linked reduction of 3-dehydroshikimate (DHSA) to yield shikimate (SA). The protein is Shikimate dehydrogenase (NADP(+)) of Tolumonas auensis (strain DSM 9187 / NBRC 110442 / TA 4).